The sequence spans 299 residues: UPF0603 protein OsI_019212, chloroplastic (299 aa).

2 stretches are compositionally biased toward low complexity: residues 1–14 (METL…LSPL) and 22–36 (ASPA…SSPA). The N-terminal 41 residues, 1-41 (METLLSPSTLLSPLRGSKKKPASPAASASSSSSSPARSVVS), are a transit peptide targeting the chloroplast. Disordered regions lie at residues 1–60 (METL…WRGD) and 244–265 (PDPG…TKEE). The N-terminal 57 residues, 42-98 (CALRRQQPPPQAVAAWRGDGGRGGGVGSWATFLQHGLAAAALSLAISMAPAPAPAVA), are a transit peptide targeting the thylakoid. The segment covering 252–265 (KDNKRESNFKTKEE) has biased composition (basic and acidic residues). Residues 276 to 296 (VVGGLLVIAFVVPMAQYYAYI) form a helical membrane-spanning segment.

This sequence belongs to the UPF0603 family.

Its subcellular location is the plastid. The protein localises to the chloroplast thylakoid membrane. This chain is UPF0603 protein OsI_019212, chloroplastic, found in Oryza sativa subsp. indica (Rice).